The chain runs to 417 residues: D-inositol 3-phosphate glycosyltransferase (417 aa).

A 1D-myo-inositol 3-phosphate-binding site is contributed by His10. Residues 16–17 (QP) and Gly24 each bind UDP-N-acetyl-alpha-D-glucosamine. 1D-myo-inositol 3-phosphate-binding positions include 21–26 (DAGGMN), Lys79, Tyr112, Thr136, and Arg156. Residues Arg230, Lys235, and Gln296 each contribute to the UDP-N-acetyl-alpha-D-glucosamine site. Residues Tyr305, Arg306, and Ala308 each contribute to the Mg(2+) site. Residues Glu318 and Glu326 each contribute to the UDP-N-acetyl-alpha-D-glucosamine site. Residue Thr332 participates in Mg(2+) binding.

Belongs to the glycosyltransferase group 1 family. MshA subfamily. As to quaternary structure, homodimer.

The catalysed reaction is 1D-myo-inositol 3-phosphate + UDP-N-acetyl-alpha-D-glucosamine = 1D-myo-inositol 2-acetamido-2-deoxy-alpha-D-glucopyranoside 3-phosphate + UDP + H(+). Its function is as follows. Catalyzes the transfer of a N-acetyl-glucosamine moiety to 1D-myo-inositol 3-phosphate to produce 1D-myo-inositol 2-acetamido-2-deoxy-glucopyranoside 3-phosphate in the mycothiol biosynthesis pathway. The sequence is that of D-inositol 3-phosphate glycosyltransferase from Actinosynnema mirum (strain ATCC 29888 / DSM 43827 / JCM 3225 / NBRC 14064 / NCIMB 13271 / NRRL B-12336 / IMRU 3971 / 101).